The chain runs to 792 residues: Kinesin-like protein KIFC2 (792 aa).

Disordered regions lie at residues 22–45 (AAAV…RRRP) and 142–184 (QGTQ…QEHQ). The segment covering 142–169 (QGTQPTCPVQPSTLDGSLSQEESSSQPT) has biased composition (polar residues). The stretch at 186-347 (LQLEEEQRVW…ARMASLRQGC (162 aa)) forms a coiled coil. Positions 409–732 (NIRVLCRLRP…LKFAERVGQV (324 aa)) constitute a Kinesin motor domain. 486-493 (GQTGTGKT) is a binding site for ATP. Residues 734 to 792 (LGPARRRRAPRSGTPSSLSTDTPLTGTSCTPTPSPGSPPSTSPNSCSGLTLEPPGDPPP) form a disordered region. The span at 744–764 (RSGTPSSLSTDTPLTGTSCTP) shows a compositional bias: low complexity. Residues 765-774 (TPSPGSPPST) show a composition bias toward pro residues.

Belongs to the TRAFAC class myosin-kinesin ATPase superfamily. Kinesin family. In terms of tissue distribution, present in axons and dendrites of neurons in the central and peripheral nervous systems.

It is found in the cytoplasm. The protein resides in the cytoskeleton. Functionally, may play a role in microtubule-dependent retrograde axonal transport. May function as the motor for the transport of multivesicular body (MVB)-like organelles in dendrites. The protein is Kinesin-like protein KIFC2 (Kifc2) of Mus musculus (Mouse).